The primary structure comprises 23 residues: U22-ctenitoxin-Co1a (23 aa).

Expressed by the venom gland.

Its subcellular location is the secreted. In Ctenus ornatus (Brazilian spider), this protein is U22-ctenitoxin-Co1a.